A 182-amino-acid chain; its full sequence is Inner membrane-spanning protein YciB (182 aa).

5 helical membrane passes run 20 to 42, 55 to 75, 76 to 96, 123 to 143, and 153 to 173; these read GGIY…WVYY, LIMI…TFIL, LKPT…AQFF, LNLA…YIAF, and FKLF…GFWM.

The protein belongs to the YciB family.

Its subcellular location is the cell inner membrane. Its function is as follows. Plays a role in cell envelope biogenesis, maintenance of cell envelope integrity and membrane homeostasis. This is Inner membrane-spanning protein YciB from Polynucleobacter asymbioticus (strain DSM 18221 / CIP 109841 / QLW-P1DMWA-1) (Polynucleobacter necessarius subsp. asymbioticus).